A 448-amino-acid polypeptide reads, in one-letter code: Probable glycine dehydrogenase (decarboxylating) subunit 1 (448 aa).

The protein belongs to the GcvP family. N-terminal subunit subfamily. In terms of assembly, the glycine cleavage system is composed of four proteins: P, T, L and H. In this organism, the P 'protein' is a heterodimer of two subunits.

The catalysed reaction is N(6)-[(R)-lipoyl]-L-lysyl-[glycine-cleavage complex H protein] + glycine + H(+) = N(6)-[(R)-S(8)-aminomethyldihydrolipoyl]-L-lysyl-[glycine-cleavage complex H protein] + CO2. Functionally, the glycine cleavage system catalyzes the degradation of glycine. The P protein binds the alpha-amino group of glycine through its pyridoxal phosphate cofactor; CO(2) is released and the remaining methylamine moiety is then transferred to the lipoamide cofactor of the H protein. This is Probable glycine dehydrogenase (decarboxylating) subunit 1 from Pyrococcus furiosus (strain ATCC 43587 / DSM 3638 / JCM 8422 / Vc1).